The primary structure comprises 311 residues: Homoserine kinase (311 aa).

89-99 is a binding site for ATP; that stretch reads PFARGLGSSAT.

This sequence belongs to the GHMP kinase family. Homoserine kinase subfamily.

The protein resides in the cytoplasm. The catalysed reaction is L-homoserine + ATP = O-phospho-L-homoserine + ADP + H(+). Its pathway is amino-acid biosynthesis; L-threonine biosynthesis; L-threonine from L-aspartate: step 4/5. Functionally, catalyzes the ATP-dependent phosphorylation of L-homoserine to L-homoserine phosphate. This is Homoserine kinase from Halothermothrix orenii (strain H 168 / OCM 544 / DSM 9562).